The sequence spans 175 residues: Large ribosomal subunit protein uL22y (175 aa).

Residues 153 to 163 are compositionally biased toward basic and acidic residues; the sequence is EKEEPVKKEPE. The segment at 153–175 is disordered; it reads EKEEPVKKEPETQLAAKSKKSAA.

Belongs to the universal ribosomal protein uL22 family.

The protein is Large ribosomal subunit protein uL22y (RPL17B) of Arabidopsis thaliana (Mouse-ear cress).